A 96-amino-acid polypeptide reads, in one-letter code: NADH-ubiquinone oxidoreductase chain 4L (96 aa).

A run of 3 helical transmembrane segments spans residues 2-22 (IMIL…FCFV), 28-48 (LLSM…MLFI), and 62-82 (MFLT…VSMI).

The protein belongs to the complex I subunit 4L family.

Its subcellular location is the mitochondrion membrane. It carries out the reaction a ubiquinone + NADH + 5 H(+)(in) = a ubiquinol + NAD(+) + 4 H(+)(out). In terms of biological role, core subunit of the mitochondrial membrane respiratory chain NADH dehydrogenase (Complex I) that is believed to belong to the minimal assembly required for catalysis. Complex I functions in the transfer of electrons from NADH to the respiratory chain. The immediate electron acceptor for the enzyme is believed to be ubiquinone. In Drosophila melanogaster (Fruit fly), this protein is NADH-ubiquinone oxidoreductase chain 4L (mt:ND4L).